The sequence spans 262 residues: Snake venom serine protease (262 aa).

An N-terminal signal peptide occupies residues 1–18; it reads MVLIRVLANLLILQLSYA. Positions 19 to 24 are excised as a propeptide; that stretch reads QKSSEL. The 229-residue stretch at 25–253 folds into the Peptidase S1 domain; that stretch reads VIGGDECNIN…YTEWIQSIIA (229 aa). 6 disulfides stabilise this stretch: Cys31-Cys167, Cys50-Cys66, Cys102-Cys260, Cys146-Cys214, Cys178-Cys193, and Cys204-Cys229. Active-site charge relay system residues include His65 and Asp114. Asn125 and Asn158 each carry an N-linked (GlcNAc...) asparagine glycan. The active-site Charge relay system is Ser208.

It belongs to the peptidase S1 family. Snake venom subfamily. Monomer. As to expression, expressed by the venom gland.

It is found in the secreted. Snake venom serine protease that may act in the hemostasis system of the prey. The sequence is that of Snake venom serine protease from Crotalus durissus durissus (Central American rattlesnake).